Consider the following 211-residue polypeptide: MPNKPKGLLIVVTGPSAVGKGTICRALLAETPGIRFSVSCTTRPKRPGEVDGVEYYFISKEEFERRIAAGEFLEWAEVYGNYYGTPRGYVEEVTAQGQDVILDIDRVGARAVREQYPDAVSVFVIPPSMEALRQRIAARGTESPEAVARRLAEAPEWIREGLTYDYVIVNDDLARAVAELRAIIMAEKARTVRNGAALIETLLEKGALTDE.

The 179-residue stretch at 7–185 (GLLIVVTGPS…AVAELRAIIM (179 aa)) folds into the Guanylate kinase-like domain. 14 to 21 (GPSAVGKG) is a binding site for ATP.

It belongs to the guanylate kinase family.

The protein resides in the cytoplasm. The enzyme catalyses GMP + ATP = GDP + ADP. Functionally, essential for recycling GMP and indirectly, cGMP. This Symbiobacterium thermophilum (strain DSM 24528 / JCM 14929 / IAM 14863 / T) protein is Guanylate kinase.